Here is a 21-residue protein sequence, read N- to C-terminus: Peptidyl-prolyl cis-trans isomerase (21 aa).

A disordered region spans residues 1 to 21; that stretch reads ENFKIKHTEPGLLSMANAGKN.

Belongs to the cyclophilin-type PPIase family. PPIase A subfamily.

The enzyme catalyses [protein]-peptidylproline (omega=180) = [protein]-peptidylproline (omega=0). Its function is as follows. PPIases accelerate the folding of proteins. It catalyzes the cis-trans isomerization of proline imidic peptide bonds in oligopeptides. In Naegleria fowleri (Brain eating amoeba), this protein is Peptidyl-prolyl cis-trans isomerase.